The chain runs to 634 residues: Kelch-like protein 22 (634 aa).

Ala-2 carries the post-translational modification N-acetylalanine. Residues 50–117 enclose the BTB domain; sequence FDVVLVVEGR…IYTSELELSL (68 aa). Kelch repeat units lie at residues 299–349, 350–399, 400–446, 448–493, 494–544, and 545–593; these read CVVG…VLNN, FVYL…VVGR, YIYA…TLEG, MYIT…TLLN, KLYV…VLDN, and RIYV…VLTL. Thr-463 is modified (phosphothreonine). The residue at position 466 (Tyr-466) is a Phosphotyrosine. Thr-475 carries the phosphothreonine modification. Residues 600–634 are disordered; that stretch reads EPPRGTPDRSQADPDFASEVMSVSDWEEFDNSSED. Thr-605 bears the Phosphothreonine mark. Residues 624 to 634 show a composition bias toward acidic residues; it reads DWEEFDNSSED.

As to quaternary structure, component of the BCR(KLHL22) E3 ubiquitin ligase complex, at least composed of CUL3, KLHL22 and RBX1. Interacts with PLK1. Interacts with DEPDC5 (via DEP domain); the interaction depends on amino acid availability. Interacts with YWHAE; required for the nuclear localization of KLHL22 upon amino acid starvation.

The protein localises to the cytoplasm. It is found in the cytosol. The protein resides in the cytoskeleton. It localises to the microtubule organizing center. Its subcellular location is the centrosome. The protein localises to the spindle. It is found in the nucleus. The protein resides in the lysosome. It functions in the pathway protein modification; protein ubiquitination. In terms of biological role, substrate-specific adapter of a BCR (BTB-CUL3-RBX1) E3 ubiquitin ligase complex required for chromosome alignment and localization of PLK1 at kinetochores. The BCR(KLHL22) ubiquitin ligase complex mediates monoubiquitination of PLK1, leading to PLK1 dissociation from phosphoreceptor proteins and subsequent removal from kinetochores, allowing silencing of the spindle assembly checkpoint (SAC) and chromosome segregation. Monoubiquitination of PLK1 does not lead to PLK1 degradation. The BCR(KLHL22) ubiquitin ligase complex is also responsible for the amino acid-stimulated 'Lys-48' polyubiquitination and proteasomal degradation of DEPDC5. Through the degradation of DEPDC5, releases the GATOR1 complex-mediated inhibition of the TORC1 pathway. It is therefore an amino acid-dependent activator within the amino acid-sensing branch of the TORC1 pathway, indirectly regulating different cellular processes including cell growth and autophagy. The sequence is that of Kelch-like protein 22 from Homo sapiens (Human).